Reading from the N-terminus, the 422-residue chain is GTPase Obg (422 aa).

An Obg domain is found at 1–158 (MFYDRAKIYV…LWLELELKVI (158 aa)). Positions 159 to 330 (ADVGLIGFPN…VIHRVAELLA (172 aa)) constitute an OBG-type G domain. GTP is bound by residues 165 to 172 (GFPNAGKS), 190 to 194 (FTTLV), 212 to 215 (DIPG), 282 to 285 (NKMD), and 311 to 313 (SAA). Mg(2+)-binding residues include serine 172 and threonine 192. The region spanning 344 to 422 (VMFEPEERFN…IGDWEFEWSE (79 aa)) is the OCT domain.

It belongs to the TRAFAC class OBG-HflX-like GTPase superfamily. OBG GTPase family. As to quaternary structure, monomer. The cofactor is Mg(2+).

Its subcellular location is the cytoplasm. Its function is as follows. An essential GTPase which binds GTP, GDP and possibly (p)ppGpp with moderate affinity, with high nucleotide exchange rates and a fairly low GTP hydrolysis rate. Plays a role in control of the cell cycle, stress response, ribosome biogenesis and in those bacteria that undergo differentiation, in morphogenesis control. The chain is GTPase Obg from Desulforamulus reducens (strain ATCC BAA-1160 / DSM 100696 / MI-1) (Desulfotomaculum reducens).